A 364-amino-acid polypeptide reads, in one-letter code: Alanine racemase (364 aa).

K35 acts as the Proton acceptor; specific for D-alanine in catalysis. K35 is subject to N6-(pyridoxal phosphate)lysine. R130 serves as a coordination point for substrate. Y256 (proton acceptor; specific for L-alanine) is an active-site residue. Residue M304 coordinates substrate.

Belongs to the alanine racemase family. The cofactor is pyridoxal 5'-phosphate.

The catalysed reaction is L-alanine = D-alanine. Its pathway is amino-acid biosynthesis; D-alanine biosynthesis; D-alanine from L-alanine: step 1/1. In terms of biological role, catalyzes the interconversion of L-alanine and D-alanine. May also act on other amino acids. This is Alanine racemase (alr) from Polaromonas sp. (strain JS666 / ATCC BAA-500).